Reading from the N-terminus, the 339-residue chain is Prepilin peptidase EppA (339 aa).

Transmembrane regions (helical) follow at residues leucine 3–isoleucine 23, isoleucine 27–tyrosine 47, phenylalanine 48–isoleucine 68, valine 75–isoleucine 95, isoleucine 99–leucine 119, aspartate 125–asparagine 145, isoleucine 146–valine 166, leucine 180–isoleucine 200, valine 204–alanine 224, and phenylalanine 319–isoleucine 339.

Belongs to the peptidase A24 family.

Its subcellular location is the cell membrane. Functionally, peptidase that processes the N-terminus of prepilins. This chain is Prepilin peptidase EppA, found in Methanocaldococcus jannaschii (strain ATCC 43067 / DSM 2661 / JAL-1 / JCM 10045 / NBRC 100440) (Methanococcus jannaschii).